Here is a 77-residue protein sequence, read N- to C-terminus: Large ribosomal subunit protein eL14 (77 aa).

The protein belongs to the eukaryotic ribosomal protein eL14 family.

The polypeptide is Large ribosomal subunit protein eL14 (Methanococcus maripaludis (strain C7 / ATCC BAA-1331)).